Reading from the N-terminus, the 466-residue chain is Glycylpeptide N-tetradecanoyltransferase (466 aa).

A disordered region spans residues 1–21; it reads MDNENNKNTKNSQQDSSFSEG. Residues 8–19 are compositionally biased toward polar residues; it reads NTKNSQQDSSFS. Position 17 is a phosphoserine (Ser17). Tetradecanoyl-CoA-binding positions include 51–54, 185–187, and 193–197; these read FKFW, LCI, and SKRLT. Catalysis depends on Ile466, which acts as the Proton acceptor; via carboxylate.

This sequence belongs to the NMT family. In terms of assembly, monomer.

Its subcellular location is the cytoplasm. The enzyme catalyses N-terminal glycyl-[protein] + tetradecanoyl-CoA = N-tetradecanoylglycyl-[protein] + CoA + H(+). Adds a myristoyl group to the N-terminal glycine residue of certain cellular proteins. This is Glycylpeptide N-tetradecanoyltransferase (nmt1) from Schizosaccharomyces pombe (strain 972 / ATCC 24843) (Fission yeast).